The sequence spans 290 residues: ATP synthase gamma chain (290 aa).

The protein belongs to the ATPase gamma chain family. As to quaternary structure, F-type ATPases have 2 components, CF(1) - the catalytic core - and CF(0) - the membrane proton channel. CF(1) has five subunits: alpha(3), beta(3), gamma(1), delta(1), epsilon(1). CF(0) has three main subunits: a, b and c.

The protein localises to the cell membrane. Produces ATP from ADP in the presence of a proton gradient across the membrane. The gamma chain is believed to be important in regulating ATPase activity and the flow of protons through the CF(0) complex. This chain is ATP synthase gamma chain, found in Wolbachia sp. subsp. Brugia malayi (strain TRS).